The primary structure comprises 64 residues: Large ribosomal subunit protein bL32 (64 aa).

Residues Met-1–Val-36 are disordered.

The protein belongs to the bacterial ribosomal protein bL32 family.

The polypeptide is Large ribosomal subunit protein bL32 (Stenotrophomonas maltophilia (strain K279a)).